The primary structure comprises 635 residues: Threonine--tRNA ligase (635 aa).

The 61-residue stretch at 1-61 (MISIRLKDGS…KEDGCLELLD (61 aa)) folds into the TGS domain. The tract at residues 242–532 (DHRRLGRELG…LTEHFGGAFP (291 aa)) is catalytic. The Zn(2+) site is built by C333, H384, and H509.

Belongs to the class-II aminoacyl-tRNA synthetase family. As to quaternary structure, homodimer. Zn(2+) is required as a cofactor.

It localises to the cytoplasm. The enzyme catalyses tRNA(Thr) + L-threonine + ATP = L-threonyl-tRNA(Thr) + AMP + diphosphate + H(+). Its function is as follows. Catalyzes the attachment of threonine to tRNA(Thr) in a two-step reaction: L-threonine is first activated by ATP to form Thr-AMP and then transferred to the acceptor end of tRNA(Thr). Also edits incorrectly charged L-seryl-tRNA(Thr). The sequence is that of Threonine--tRNA ligase from Syntrophomonas wolfei subsp. wolfei (strain DSM 2245B / Goettingen).